Reading from the N-terminus, the 458-residue chain is UDP-N-acetylmuramate--L-alanine ligase (458 aa).

118-124 contributes to the ATP binding site; the sequence is GTHGKTT.

The protein belongs to the MurCDEF family.

The protein resides in the cytoplasm. The catalysed reaction is UDP-N-acetyl-alpha-D-muramate + L-alanine + ATP = UDP-N-acetyl-alpha-D-muramoyl-L-alanine + ADP + phosphate + H(+). Its pathway is cell wall biogenesis; peptidoglycan biosynthesis. Its function is as follows. Cell wall formation. The chain is UDP-N-acetylmuramate--L-alanine ligase from Clostridium botulinum (strain Langeland / NCTC 10281 / Type F).